The primary structure comprises 159 residues: Putative ribosomal RNA large subunit methyltransferase H (159 aa).

Residues Leu-76, Gly-108, and 127-132 (FSKMTF) each bind S-adenosyl-L-methionine.

It belongs to the RNA methyltransferase RlmH family.

Its subcellular location is the cytoplasm. It catalyses the reaction pseudouridine(1915) in 23S rRNA + S-adenosyl-L-methionine = N(3)-methylpseudouridine(1915) in 23S rRNA + S-adenosyl-L-homocysteine + H(+). In terms of biological role, specifically methylates the pseudouridine at position 1915 (m3Psi1915) in 23S rRNA. This is Putative ribosomal RNA large subunit methyltransferase H from Methanococcus maripaludis (strain DSM 14266 / JCM 13030 / NBRC 101832 / S2 / LL).